We begin with the raw amino-acid sequence, 533 residues long: Thromboxane-A synthase (533 aa).

The Cytoplasmic segment spans residues Met-1–Glu-10. A helical membrane pass occupies residues Val-11–Tyr-31. Over Ser-32–Gly-75 the chain is Lumenal. Residues Pro-76–Ile-96 traverse the membrane as a helical segment. Topologically, residues Lys-97–Arg-223 are cytoplasmic. A helical membrane pass occupies residues Pro-224–Pro-244. The Lumenal segment spans residues Asn-245–Ala-335. Residues Phe-336–Leu-356 form a helical membrane-spanning segment. Over Leu-357–Arg-533 the chain is Cytoplasmic. Cys-479 is a binding site for heme.

The protein belongs to the cytochrome P450 family. As to quaternary structure, monomer. Requires heme as cofactor. In terms of tissue distribution, expressed primarily in lung, kidney, and spleen.

It localises to the endoplasmic reticulum membrane. The catalysed reaction is prostaglandin H2 = thromboxane A2. It carries out the reaction prostaglandin H2 = (12S)-hydroxy-(5Z,8E,10E)-heptadecatrienoate + malonaldehyde. The enzyme catalyses a hydroperoxyeicosatetraenoate = an oxoeicosatetraenoate + H2O. It catalyses the reaction (15S)-hydroperoxy-(5Z,8Z,11Z,13E)-eicosatetraenoate = 15-oxo-(5Z,8Z,11Z,13E)-eicosatetraenoate + H2O. The catalysed reaction is (15S)-hydroperoxy-(5Z,8Z,11Z,13E)-eicosatetraenoate + AH2 = (15S)-hydroxy-(5Z,8Z,11Z,13E)-eicosatetraenoate + A + H2O. In terms of biological role, catalyzes the conversion of prostaglandin H2 (PGH2) to thromboxane A2 (TXA2), a potent inducer of blood vessel constriction and platelet aggregation. Also cleaves PGH2 to 12-hydroxy-heptadecatrienoicacid (12-HHT) and malondialdehyde, which is known to act as a mediator of DNA damage. 12-HHT and malondialdehyde are formed stoichiometrically in the same amounts as TXA2. Additionally, displays dehydratase activity, toward (15S)-hydroperoxy-(5Z,8Z,11Z,13E)-eicosatetraenoate (15(S)-HPETE) producing 15-KETE and 15-HETE. This is Thromboxane-A synthase (Tbxas1) from Mus musculus (Mouse).